A 55-amino-acid chain; its full sequence is uncharacterized protein (55 aa).

Helical transmembrane passes span 2 to 19 (VIGL…SFIA) and 24 to 46 (LLSI…FRYF).

It localises to the cell membrane. This is an uncharacterized protein from Alkalihalophilus pseudofirmus (strain ATCC BAA-2126 / JCM 17055 / OF4) (Bacillus pseudofirmus).